The sequence spans 243 residues: Probable transcriptional regulatory protein LCA_1307 (243 aa).

Residues 1 to 21 (MSGHSKWHNIQGRKNAQDAKR) form a disordered region.

Belongs to the TACO1 family.

It is found in the cytoplasm. This Latilactobacillus sakei subsp. sakei (strain 23K) (Lactobacillus sakei subsp. sakei) protein is Probable transcriptional regulatory protein LCA_1307.